A 163-amino-acid polypeptide reads, in one-letter code: Cytochrome c-type biogenesis protein CcmE (163 aa).

Over 1-8 (MNPRRKKR) the chain is Cytoplasmic. A helical; Signal-anchor for type II membrane protein membrane pass occupies residues 9–29 (LTIILAISAGLAAVIGLVLYA). The Periplasmic portion of the chain corresponds to 30 to 163 (LSQNIDLFYT…TEAQLKGSKQ (134 aa)). Heme-binding residues include His131 and Tyr135.

The protein belongs to the CcmE/CycJ family.

It localises to the cell inner membrane. Functionally, heme chaperone required for the biogenesis of c-type cytochromes. Transiently binds heme delivered by CcmC and transfers the heme to apo-cytochromes in a process facilitated by CcmF and CcmH. The chain is Cytochrome c-type biogenesis protein CcmE from Aeromonas hydrophila subsp. hydrophila (strain ATCC 7966 / DSM 30187 / BCRC 13018 / CCUG 14551 / JCM 1027 / KCTC 2358 / NCIMB 9240 / NCTC 8049).